We begin with the raw amino-acid sequence, 145 residues long: Large ribosomal subunit protein uL11 (145 aa).

Belongs to the universal ribosomal protein uL11 family. In terms of assembly, part of the ribosomal stalk of the 50S ribosomal subunit. Interacts with L10 and the large rRNA to form the base of the stalk. L10 forms an elongated spine to which L12 dimers bind in a sequential fashion forming a multimeric L10(L12)X complex. Post-translationally, one or more lysine residues are methylated.

Forms part of the ribosomal stalk which helps the ribosome interact with GTP-bound translation factors. The polypeptide is Large ribosomal subunit protein uL11 (Flavobacterium johnsoniae (strain ATCC 17061 / DSM 2064 / JCM 8514 / BCRC 14874 / CCUG 350202 / NBRC 14942 / NCIMB 11054 / UW101) (Cytophaga johnsonae)).